Reading from the N-terminus, the 596-residue chain is MPPRGLELLIAQTILQGFDAQYGRFLEITAGAQHRFEQADWHAVQQAMKSRIHLYDHHVGLVVEQLRCIMEGKATDPDFLLRVKRHYTDLLPDYPRFEIAESFFNSVYCRLYDHRSLTPDRLFIFSSQPERRFRTMPRPLAKNFFPEQGWQPLLTTLLTDLPLRLPWQDLARDVRYIIAHLNETLGPARLAQAHLEMANELFYRNKAAWLVGKLRLPDATLPFLLPVHRSDDGELFVDTCLTGSAGASIVFGFARSYFMVYAPLPAALVEWLREILPGKTTAELYMAIGCQKHAKTESYREYLHYLRHADEQFIEAPGIRGMVMLVFTLPGFDRVFKVIKDRFAPQKEMSEAHVRACYQLVKEHDRVGRMADTQEFENFVIEKRRISPELMALLQQEVGQKLTDMGDKISISHLYIERRMVPLNIWLEQATGQQLRDAIEEYGNAIRQLAAANIFPGDMLFKNFGVTRHGRVVFYDYDEICYMTEVNFRDIPPPRYPEDELSAEPWYSVAPGDVFPEEFRHWLCADPKIGPLFEEMHSDLFSASYWRALQTRIREGYVEDVYAYRRRQRFCVRWKNHNGHPEAAVSAIAPSAVGEG.

ATP is bound by residues 316–322 and Lys337; that span reads APGIRGM. The active site involves Asp372.

This sequence belongs to the AceK family.

The protein localises to the cytoplasm. The catalysed reaction is L-seryl-[isocitrate dehydrogenase] + ATP = O-phospho-L-seryl-[isocitrate dehydrogenase] + ADP + H(+). Functionally, bifunctional enzyme which can phosphorylate or dephosphorylate isocitrate dehydrogenase (IDH) on a specific serine residue. This is a regulatory mechanism which enables bacteria to bypass the Krebs cycle via the glyoxylate shunt in response to the source of carbon. When bacteria are grown on glucose, IDH is fully active and unphosphorylated, but when grown on acetate or ethanol, the activity of IDH declines drastically concomitant with its phosphorylation. In Cronobacter sakazakii (strain ATCC BAA-894) (Enterobacter sakazakii), this protein is Isocitrate dehydrogenase kinase/phosphatase.